Reading from the N-terminus, the 30-residue chain is Bacteriocin curvaticin (30 aa).

A disulfide bridge connects residues Cys-9 and Cys-14.

Its subcellular location is the secreted. In terms of biological role, has antibacterial activity against the Gram-positive bacterium L.monocytogenes. The protein is Bacteriocin curvaticin of Latilactobacillus curvatus (Lactobacillus curvatus).